A 1402-amino-acid chain; its full sequence is DNA-directed RNA polymerase subunit beta' (1402 aa).

Zn(2+) contacts are provided by Cys71, Cys73, Cys86, and Cys89. Residues Asp462, Asp464, and Asp466 each contribute to the Mg(2+) site. Residues Cys811, Cys885, Cys892, and Cys895 each coordinate Zn(2+).

Belongs to the RNA polymerase beta' chain family. As to quaternary structure, the RNAP catalytic core consists of 2 alpha, 1 beta, 1 beta' and 1 omega subunit. When a sigma factor is associated with the core the holoenzyme is formed, which can initiate transcription. It depends on Mg(2+) as a cofactor. Zn(2+) is required as a cofactor.

The enzyme catalyses RNA(n) + a ribonucleoside 5'-triphosphate = RNA(n+1) + diphosphate. In terms of biological role, DNA-dependent RNA polymerase catalyzes the transcription of DNA into RNA using the four ribonucleoside triphosphates as substrates. The chain is DNA-directed RNA polymerase subunit beta' from Rhizobium johnstonii (strain DSM 114642 / LMG 32736 / 3841) (Rhizobium leguminosarum bv. viciae).